Here is a 324-residue protein sequence, read N- to C-terminus: Malate dehydrogenase (324 aa).

NAD(+) contacts are provided by residues 7-13 (GAAGGIG) and D34. Positions 88 and 94 each coordinate substrate. NAD(+) is bound by residues N101 and 124–126 (VTN). N126 and R160 together coordinate substrate. H184 functions as the Proton acceptor in the catalytic mechanism. M238 is a binding site for NAD(+).

It belongs to the LDH/MDH superfamily. MDH type 1 family. As to quaternary structure, homodimer.

It catalyses the reaction (S)-malate + NAD(+) = oxaloacetate + NADH + H(+). Its function is as follows. Catalyzes the reversible oxidation of malate to oxaloacetate. This is Malate dehydrogenase from Haemophilus ducreyi (strain 35000HP / ATCC 700724).